A 455-amino-acid polypeptide reads, in one-letter code: Vimentin (455 aa).

Residues 1–87 (MASRTNTSSY…GLADAINTEF (87 aa)) form a head region. The stretch at 87 to 122 (FKTNRTNEKAEMQHLNDRFASYIDKVRFLEQQNKIL) forms a coiled coil. The tract at residues 88-122 (KTNRTNEKAEMQHLNDRFASYIDKVRFLEQQNKIL) is coil 1A. An IF rod domain is found at 94 to 402 (EKAEMQHLND…KLLEGEESRI (309 aa)). The linker 1 stretch occupies residues 123 to 144 (IAELEQMRGKGSSRVGDLYQDE). Residues 145–236 (MRELRRQVDQ…KLHDEELAEL (92 aa)) adopt a coiled-coil conformation. A coil 1B region spans residues 145 to 236 (MRELRRQVDQ…KLHDEELAEL (92 aa)). A linker 12 region spans residues 237–259 (QIQIQEQHVQIDMEVAKPDLTAA). Positions 260 to 398 (LKDVRQQYET…ATYRKLLEGE (139 aa)) are coil 2. The stretch at 294–398 (ARNNEAIRLA…ATYRKLLEGE (105 aa)) forms a coiled coil. Positions 399-455 (ESRITTPFPNLSSLTLRETMKETRPAMDSLSKKVVIKTIETRDGHIINESSQNDDLE) are tail.

This sequence belongs to the intermediate filament family. In terms of assembly, homomer assembled from elementary dimers. In terms of processing, one of the most prominent phosphoproteins in various cells of mesenchymal origin. Phosphorylation is enhanced during cell division, at which time vimentin filaments are significantly reorganized.

The protein resides in the cytoplasm. Its subcellular location is the cytoskeleton. The protein localises to the nucleus matrix. Vimentins are class-III intermediate filaments found in various non-epithelial cells, especially mesenchymal cells. Vimentin is attached to the nucleus, endoplasmic reticulum, and mitochondria, either laterally or terminally. This Cyprinus carpio (Common carp) protein is Vimentin (vim).